We begin with the raw amino-acid sequence, 821 residues long: Pentatricopeptide repeat-containing protein At4g04790, mitochondrial (821 aa).

The transit peptide at 1 to 74 (MVVSKVNKSL…KLLHVTTSDK (74 aa)) directs the protein to the mitochondrion. PPR repeat units lie at residues 372–406 (SSTSYEKLVKYSCDSNEVVTALDVVEKMGEAGLMI), 407–441 (SADILHSLLHAIDEVLEFDLVRRIHSIMCTKSVKP), 442–476 (NTENFRSIIRLCTRIKDFEGAYNMLGNLKNFNLEP), 477–511 (NSSMFNCILAGYFREKNVSSALMVVKQMKEAGVKP), 512–542 (DSITFGYLINNCTQEDAITKYYEEMKQAGVQ), 544–574 (TKRIYMSLIDAYAASGKFEKAKQVLVDPDVP), and 578–612 (QNELKSVLISALASRGKWADALHIYEEMRKAECHV). Residues 801–821 (AFSQAPNKKKPKKKMIVLSTK) form a disordered region.

The protein belongs to the PPR family. P subfamily.

The protein localises to the mitochondrion. The chain is Pentatricopeptide repeat-containing protein At4g04790, mitochondrial from Arabidopsis thaliana (Mouse-ear cress).